Reading from the N-terminus, the 104-residue chain is Flagellar hook-basal body complex protein FliE (104 aa).

Belongs to the FliE family.

It is found in the bacterial flagellum basal body. The sequence is that of Flagellar hook-basal body complex protein FliE from Edwardsiella ictaluri (strain 93-146).